A 430-amino-acid polypeptide reads, in one-letter code: Enolase (430 aa).

Gln-165 provides a ligand contact to (2R)-2-phosphoglycerate. The active-site Proton donor is the Glu-207. Asp-244, Glu-287, and Asp-314 together coordinate Mg(2+). Positions 339, 368, 369, and 390 each coordinate (2R)-2-phosphoglycerate. The Proton acceptor role is filled by Lys-339.

This sequence belongs to the enolase family. Component of the RNA degradosome, a multiprotein complex involved in RNA processing and mRNA degradation. It depends on Mg(2+) as a cofactor.

It is found in the cytoplasm. The protein localises to the secreted. Its subcellular location is the cell surface. It carries out the reaction (2R)-2-phosphoglycerate = phosphoenolpyruvate + H2O. It functions in the pathway carbohydrate degradation; glycolysis; pyruvate from D-glyceraldehyde 3-phosphate: step 4/5. In terms of biological role, catalyzes the reversible conversion of 2-phosphoglycerate (2-PG) into phosphoenolpyruvate (PEP). It is essential for the degradation of carbohydrates via glycolysis. The protein is Enolase of Xylella fastidiosa (strain 9a5c).